The chain runs to 153 residues: MRIQTERFGVLDVPDEAVIRFPQGIPGFPQEKAFVLLPCAEADAFAFLQSIMTPPLAFLLVTPFAFFPDYNAPIHIEQVRHIGIDENNLGEIWTIVTVPDNYHDMTTNLLAPLVINRKKGEAAQVVLEKTNYTTKHRLYPASASTEANGKGGG.

This sequence belongs to the FliW family. Interacts with translational regulator CsrA and flagellin(s).

It localises to the cytoplasm. Acts as an anti-CsrA protein, binds CsrA and prevents it from repressing translation of its target genes, one of which is flagellin. Binds to flagellin and participates in the assembly of the flagellum. This Heliobacterium modesticaldum (strain ATCC 51547 / Ice1) protein is Flagellar assembly factor FliW.